We begin with the raw amino-acid sequence, 414 residues long: NADH-quinone oxidoreductase subunit D (414 aa).

This sequence belongs to the complex I 49 kDa subunit family. As to quaternary structure, NDH-1 is composed of 14 different subunits. Subunits NuoB, C, D, E, F, and G constitute the peripheral sector of the complex.

The protein resides in the cell inner membrane. It catalyses the reaction a quinone + NADH + 5 H(+)(in) = a quinol + NAD(+) + 4 H(+)(out). Functionally, NDH-1 shuttles electrons from NADH, via FMN and iron-sulfur (Fe-S) centers, to quinones in the respiratory chain. The immediate electron acceptor for the enzyme in this species is believed to be ubiquinone. Couples the redox reaction to proton translocation (for every two electrons transferred, four hydrogen ions are translocated across the cytoplasmic membrane), and thus conserves the redox energy in a proton gradient. The chain is NADH-quinone oxidoreductase subunit D from Akkermansia muciniphila (strain ATCC BAA-835 / DSM 22959 / JCM 33894 / BCRC 81048 / CCUG 64013 / CIP 107961 / Muc).